The sequence spans 262 residues: Thiazole synthase (262 aa).

K104 functions as the Schiff-base intermediate with DXP in the catalytic mechanism. Residues G165, 191 to 192 (AG), and 213 to 214 (NT) contribute to the 1-deoxy-D-xylulose 5-phosphate site.

This sequence belongs to the ThiG family. As to quaternary structure, homotetramer. Forms heterodimers with either ThiH or ThiS.

The protein resides in the cytoplasm. The catalysed reaction is [ThiS sulfur-carrier protein]-C-terminal-Gly-aminoethanethioate + 2-iminoacetate + 1-deoxy-D-xylulose 5-phosphate = [ThiS sulfur-carrier protein]-C-terminal Gly-Gly + 2-[(2R,5Z)-2-carboxy-4-methylthiazol-5(2H)-ylidene]ethyl phosphate + 2 H2O + H(+). It functions in the pathway cofactor biosynthesis; thiamine diphosphate biosynthesis. Catalyzes the rearrangement of 1-deoxy-D-xylulose 5-phosphate (DXP) to produce the thiazole phosphate moiety of thiamine. Sulfur is provided by the thiocarboxylate moiety of the carrier protein ThiS. In vitro, sulfur can be provided by H(2)S. This is Thiazole synthase from Alkalilimnicola ehrlichii (strain ATCC BAA-1101 / DSM 17681 / MLHE-1).